A 563-amino-acid chain; its full sequence is Arginine--tRNA ligase (563 aa).

The short motif at 120-130 (PNIAKPFHIGH) is the 'HIGH' region element.

It belongs to the class-I aminoacyl-tRNA synthetase family. Monomer.

It is found in the cytoplasm. It carries out the reaction tRNA(Arg) + L-arginine + ATP = L-arginyl-tRNA(Arg) + AMP + diphosphate. In Clostridium botulinum (strain Loch Maree / Type A3), this protein is Arginine--tRNA ligase.